The following is a 179-amino-acid chain: Large ribosomal subunit protein uL10 (179 aa).

Residues 137-179 (KEELYAMLVGRVKAPITGLVFALSGILRNLVYVLNAIKEKKSE) form a binds L7/L12 dimers region.

As to quaternary structure, part of the ribosomal stalk of the 50S ribosomal subunit. The N-terminus interacts with L11 and 23S rRNA to form the base of the stalk. The C-terminus forms an elongated spine to which 3 L12 dimers bind in a sequential fashion forming a heptameric L10(L12)2(L12)2(L12)2 complex.

Functionally, forms part of the ribosomal stalk, playing a central role in the interaction of the ribosome with GTP-bound translation factors (such as IF-2, EF-Tu, EF-G and RF3). This Thermotoga maritima (strain ATCC 43589 / DSM 3109 / JCM 10099 / NBRC 100826 / MSB8) protein is Large ribosomal subunit protein uL10 (rplJ).